The primary structure comprises 283 residues: NAD kinase (283 aa).

Aspartate 66 (proton acceptor) is an active-site residue. Residues 66–67 (DG), 137–138 (ND), arginine 165, aspartate 167, and 178–183 (TGYSLS) each bind NAD(+).

This sequence belongs to the NAD kinase family. A divalent metal cation is required as a cofactor.

It localises to the cytoplasm. It carries out the reaction NAD(+) + ATP = ADP + NADP(+) + H(+). Functionally, involved in the regulation of the intracellular balance of NAD and NADP, and is a key enzyme in the biosynthesis of NADP. Catalyzes specifically the phosphorylation on 2'-hydroxyl of the adenosine moiety of NAD to yield NADP. This chain is NAD kinase, found in Chloroherpeton thalassium (strain ATCC 35110 / GB-78).